We begin with the raw amino-acid sequence, 1077 residues long: Response regulator SSK1 (1077 aa).

Residues 854 to 1000 (NVLIVEDNII…FLERKVMEWG (147 aa)) form the Response regulatory domain. Aspartate 903 carries the post-translational modification 4-aspartylphosphate.

The protein belongs to the SSK1 family.

The protein resides in the cytoplasm. Functionally, two-domain response regulator protein in the two-component signal transduction system of the HOG1 pathway. Involved in multi-stress responses and is essential for conidiation, secondary metabolism, autophagy and endocyrosis. In addition, regulates mycelial growth, cell nucleus development, septum formation, and organelle development. Also regulates trap formation and thus plays a crucial role in pathogenicity. The polypeptide is Response regulator SSK1 (Arthrobotrys oligospora (strain ATCC 24927 / CBS 115.81 / DSM 1491) (Nematode-trapping fungus)).